We begin with the raw amino-acid sequence, 737 residues long: MNLPWALLLVLLSHRQLLPWLRTVGETSLNDFYSEAQAKLFLQFYEQTAQVVLNEFMEATWNYVTNITKQNQKNMLQKEADRSQFMLYFSTRARMFRTDHFLNQDVKRMLRKLQNIDKSALPTEDLLEYNRLLTYMETAYNRAEVCLDEGPCLTLEPDLQEIMATSRDQKELLWAWQGWRDAVGRQLRPVFEDYVRLSNKAAQYNGYKDMGALWRSKYESDTLEEDLEQLYKELQPLYLNLHAYVRRSLYRYYGPELIDLRGPIPAHLLGNMWAQSWNNILDLVLPYPTKAPEDITAIMKIQHWRPEKMFEEANLFFTSMGMLPAPPAFWIKSMMEKPADGREVECHTSSWNFYKFNDFRVKKCTEVTLEDLLSVFHQMGHIQYFLQYQNLSVIYQEGASPAFEEAVGSVIALSVSSHKYLLARGLLSQPHQDSEEEVNFLLGIALEKIAFIPFSYLVDKFRWKIFDGTISKITYNQEWWNFRLKYQGLCPPVPRSDDDFDPGAKFHIPANVPYIRYFLGLILQFQLHEALCEASGHVGPLHQCDNYNSKVAGKILGDLLKLGSSRPWREVLQEVTGESNISTKAFLTYFKPLMDWLVTENVKQGDTLGWPDFSCSFEEKITSKVSFLGTDTEPEQAYLGQWVLLSMSFFMLVLILALGFRLHYLEKQLLDEDTMILKTLPYSYFLGIAMEPHQAARKQWLLLGLCCILMLCCIGLLIRIVTQNTENTPWMKNEGQS.

An N-terminal signal peptide occupies residues 1 to 23 (MNLPWALLLVLLSHRQLLPWLRT). At 24–639 (VGETSLNDFY…TDTEPEQAYL (616 aa)) the chain is on the extracellular side. Positions 32–611 (FYSEAQAKLF…VKQGDTLGWP (580 aa)) constitute a Peptidase M2 domain. Cys-146 and Cys-152 are joined by a disulfide. 2 residues coordinate chloride: Arg-180 and Tyr-218. A disulfide bond links Cys-346 and Cys-364. His-377 and His-381 together coordinate Zn(2+). A glycan (N-linked (GlcNAc...) asparagine) is linked at Asn-390. Residue Glu-405 participates in Zn(2+) binding. Chloride-binding residues include Trp-479, Arg-483, and Arg-516. An intrachain disulfide couples Cys-532 to Cys-544. The chain crosses the membrane as a helical span at residues 640–660 (GQWVLLSMSFFMLVLILALGF). Over 661–700 (RLHYLEKQLLDEDTMILKTLPYSYFLGIAMEPHQAARKQW) the chain is Cytoplasmic. The helical transmembrane segment at 701–721 (LLLGLCCILMLCCIGLLIRIV) threads the bilayer. Over 722–737 (TQNTENTPWMKNEGQS) the chain is Extracellular.

Belongs to the peptidase M2 family. As to quaternary structure, interacts with IZUMO1. Zn(2+) serves as cofactor. In terms of tissue distribution, expressed in sperm and testis (at protein level). Expressed in heart and testis. Not detected in kidney, lung, liver, brain, ovary, spleen and thymus.

The protein localises to the cytoplasmic vesicle. The protein resides in the secretory vesicle. It is found in the acrosome membrane. This is Angiotensin-converting enzyme-like protein Ace3 from Mus musculus (Mouse).